The sequence spans 208 residues: Putative 3-methyladenine DNA glycosylase (208 aa).

The protein belongs to the DNA glycosylase MPG family.

This chain is Putative 3-methyladenine DNA glycosylase, found in Prosthecochloris aestuarii (strain DSM 271 / SK 413).